Reading from the N-terminus, the 661-residue chain is Meiotic coiled-coil protein 1 (661 aa).

Coiled coils occupy residues 38–78 (LDAL…IIEE), 100–121 (RAIY…ERLS), 143–184 (DIKL…LSIK), 304–320 (ELIQ…EVDL), and 360–387 (LKRL…DNEK). Disordered regions lie at residues 410–446 (QNQE…LRNI), 467–562 (LIDR…TPAS), and 573–592 (LSRT…TPTQ). A compositionally biased stretch (low complexity) spans 414–430 (NISSNDNSKSSPESSPP). A compositionally biased stretch (basic and acidic residues) spans 436-445 (GKIENKKLRN). Polar residues-rich tracts occupy residues 472-481 (VNQSPDTRSV), 548-562 (HNSV…TPAS), and 582-592 (FTNSLDDTPTQ).

This is Meiotic coiled-coil protein 1 (mcp1) from Schizosaccharomyces pombe (strain 972 / ATCC 24843) (Fission yeast).